The sequence spans 391 residues: GDSL esterase/lipase 22 (391 aa).

The first 29 residues, 1–29, serve as a signal peptide directing secretion; that stretch reads MMANNCNLVSVLCVILVLTLFHNPITVAG. The active-site Nucleophile is Ser-43. Asn-105, Asn-165, and Asn-288 each carry an N-linked (GlcNAc...) asparagine glycan. Active-site residues include Asp-322 and His-325. The segment at 372-391 is disordered; that stretch reads PATVHASDSSSSTSRGYEYY.

This sequence belongs to the 'GDSL' lipolytic enzyme family. In terms of assembly, component of the PYK10 complex, at least composed of PYK10/BGLU23, BGLU21, BGLU22, JAL22, JAL23, PBP1/JAL30, PBP2/JAL31, JAL32, JAL33, JAL34, JAL35, GLL22 and GLL23.

It localises to the secreted. The protein is GDSL esterase/lipase 22 (GLL22) of Arabidopsis thaliana (Mouse-ear cress).